A 582-amino-acid chain; its full sequence is Aspartate--tRNA ligase (582 aa).

Residue E174 participates in L-aspartate binding. Residues 198–201 are aspartate; that stretch reads QITK. L-aspartate is bound at residue R220. ATP contacts are provided by residues 220–222 and Q229; that span reads RDE. H443 contributes to the L-aspartate binding site. Residue E477 coordinates ATP. R484 provides a ligand contact to L-aspartate. 529–532 serves as a coordination point for ATP; sequence GLDR.

This sequence belongs to the class-II aminoacyl-tRNA synthetase family. Type 1 subfamily. As to quaternary structure, homodimer.

The protein localises to the cytoplasm. It catalyses the reaction tRNA(Asp) + L-aspartate + ATP = L-aspartyl-tRNA(Asp) + AMP + diphosphate. Its function is as follows. Catalyzes the attachment of L-aspartate to tRNA(Asp) in a two-step reaction: L-aspartate is first activated by ATP to form Asp-AMP and then transferred to the acceptor end of tRNA(Asp). The protein is Aspartate--tRNA ligase of Streptococcus pyogenes serotype M5 (strain Manfredo).